The primary structure comprises 1212 residues: Metabotropic glutamate receptor 5 (1212 aa).

Positions M1 to A20 are cleaved as a signal peptide. Over S22–P580 the chain is Extracellular. An intrachain disulfide couples C57 to C99. Residue Y64 participates in L-glutamate binding. The N-linked (GlcNAc...) asparagine glycan is linked to N88. L-glutamate is bound by residues S152 and S173–T175. N210 carries N-linked (GlcNAc...) asparagine glycosylation. Y223 is an L-glutamate binding site. Cystine bridges form between C241-C530, C276-C278, C365-C381, C419-C426, C511-C531, C515-C534, C537-C549, and C552-C565. D305 is an L-glutamate binding site. 2 N-linked (GlcNAc...) asparagine glycosylation sites follow: N378 and N382. Residue K396 coordinates L-glutamate. Residue N445 is glycosylated (N-linked (GlcNAc...) asparagine). A helical membrane pass occupies residues I581–I603. Topologically, residues Y604–S613 are cytoplasmic. Residues S614 to I636 traverse the membrane as a helical segment. The Extracellular portion of the chain corresponds to A637 to C644. A disulfide bridge links C644 with C733. The helical transmembrane segment at Y645 to N667 threads the bilayer. Residues R668–Q693 lie on the Cytoplasmic side of the membrane. The helical transmembrane segment at L694 to M714 threads the bilayer. At E715 to N737 the chain is on the extracellular side. The N-linked (GlcNAc...) asparagine glycan is linked to N734. Residues L738–F759 form a helical membrane-spanning segment. The Cytoplasmic segment spans residues K760–K772. Residues Y773–S795 traverse the membrane as a helical segment. Topologically, residues N796–K798 are extracellular. The chain crosses the membrane as a helical span at residues I799–P820. The Cytoplasmic segment spans residues K821 to L1212. Residue S861 is modified to Phosphoserine. R869 and R925 each carry omega-N-methylarginine. Disordered regions lie at residues I937–A971, F1010–S1056, and G1132–I1191. Residues L961–A971 show a composition bias toward gly residues. A phosphoserine mark is found at S1018 and S1020. Low complexity predominate over residues G1132–A1153. Polar residues predominate over residues D1174–S1185.

Belongs to the G-protein coupled receptor 3 family. The PPXXF motif binds HOMER1, HOMER2 and HOMER3. Interacts with SIAH1, RYR1, RYR2, ITPR1, SHANK1, SHANK3 and TAMALIN. Interacts with NCDN. Isoform 2 interacts with NECAB2. Interacts with CAMK2A.

The protein localises to the cell membrane. G-protein coupled receptor for glutamate. Ligand binding causes a conformation change that triggers signaling via guanine nucleotide-binding proteins (G proteins) and modulates the activity of down-stream effectors. Signaling activates a phosphatidylinositol-calcium second messenger system and generates a calcium-activated chloride current. Plays an important role in the regulation of synaptic plasticity and the modulation of the neural network activity. This Homo sapiens (Human) protein is Metabotropic glutamate receptor 5 (GRM5).